The chain runs to 131 residues: MTEIPADLHYTEEHEWVRRTGDTTVRIGITDYAQSQLGDVVFVQLPDVGSELTAGSTFGEVESTKSVSDLFAPITAKVIAANGDLDSDPQLVNSDPYGEGWLVDLEAASAADLDAALNDLLDASGYGDATD.

Residues 24–106 (TVRIGITDYA…YGEGWLVDLE (83 aa)) enclose the Lipoyl-binding domain. At lysine 65 the chain carries N6-lipoyllysine.

The protein belongs to the GcvH family. As to quaternary structure, the glycine cleavage system is composed of four proteins: P, T, L and H. Requires (R)-lipoate as cofactor.

Functionally, the glycine cleavage system catalyzes the degradation of glycine. The H protein shuttles the methylamine group of glycine from the P protein to the T protein. The sequence is that of Glycine cleavage system H protein from Mycobacteroides abscessus (strain ATCC 19977 / DSM 44196 / CCUG 20993 / CIP 104536 / JCM 13569 / NCTC 13031 / TMC 1543 / L948) (Mycobacterium abscessus).